We begin with the raw amino-acid sequence, 777 residues long: Protein argonaute (777 aa).

Positions 1–107 (MAPVQAADEM…ARLDDALEEA (107 aa)) are N-terminal domain. The linker L1 stretch occupies residues 108–182 (LPKYAAVKKR…TIGMRYDIEA (75 aa)). A PAZ domain region spans residues 183–243 (SLRDLLEAGI…VNVNDAKLEG (61 aa)). Residues 244–341 (SKENFTRCLS…DRTGAKSAEY (98 aa)) are linker L2. Positions 342-509 (AWRGLSQFGP…SIATYAKLNG (168 aa)) are mid domain. The Piwi domain occupies 445–757 (GIVVLFEDHA…IAELLGRLKS (313 aa)). A PIWI domain region spans residues 510–777 (TPWTVNHDKA…IKLKWSRWFL (268 aa)). Leu777 is a Mg(2+) binding site.

Belongs to the argonaute family. Long pAgo subfamily. It depends on Mg(2+) as a cofactor.

A catalytically inactive argonaute protein. Binds 5'-phosphorylated RNA as the guide (gRNA) and short DNA as target DNA (tDNA); does not bind other nucleic acid combinations, does not bind tDNA alone. Has highest affinity for gRNA that begins with 5'-phospho-U and poor affinity for gRNA with 5'-OH. Upon expression in E.coli, plasmid sequences are found in RsAgo, its induction leads to plasmid degradation and suppression of genes encoded on foreign plasmids, suggesting it may also interfere with transcription. Does not interact with preformed gRNA:tDNA duplexes. Mismatches and nt bulges are tolerated in the ternary complex, however, they significantly reduce the affinity of RsAgo:gRNA for tDNA. Mismatched tDNA can cause dissociation of gRNA from RsAgo. In situ binds 2 populations of RNA (15-19 and 45 nucleotides, nt) and a population of ssDNA 22-24 nt in length. The small sense RNA is probably derived from mRNA degradation and strongly enriched for U in the first and U/C in the second positions. The small DNA is enriched for sequences complementary to the RNA, with 3 nt overhangs on both ends; another nuclease may trim the ends. The sequences are largely derived from exogenous plasmids or genome-encoded foreign elements such as prophages and transposons. Forms a ternary complex with gRNA and double-stranded tDNA only when the tDNA is open. The sequence is that of Protein argonaute from Cereibacter sphaeroides (strain ATCC 17025 / ATH 2.4.3) (Rhodobacter sphaeroides).